A 320-amino-acid polypeptide reads, in one-letter code: MSRQSKKKGRSISGWVILDKPKAMKSTEAVSKIKRLFNAQKAGHAGTLDPLASGLLPIALGEATKTVPYVMEGTKTYHFHVAWGEERSTDDLEGVVTKTSSKRPTQEEIFALLPKYTGVILQTPPQFSAIKIAGNRAYDLAREGEIFEIPPRQVKIDSLELIGTTDQGYSIFEMTCGKGTYVRSLARDMGHDLGCYGYIADLRRTAVAPFCENDLITWDALKAAIPHENTTDENCIPLKQNFSTLDGLLIETDVALKCLAHYTLNQIQAQRVRMGNSILLCDQNMPTSNIDICVTYKAQLLAIGTIDQNQFKPKRIFTTL.

Aspartate 49 serves as the catalytic Nucleophile.

Belongs to the pseudouridine synthase TruB family. Type 1 subfamily.

It catalyses the reaction uridine(55) in tRNA = pseudouridine(55) in tRNA. In terms of biological role, responsible for synthesis of pseudouridine from uracil-55 in the psi GC loop of transfer RNAs. The protein is tRNA pseudouridine synthase B of Bartonella bacilliformis (strain ATCC 35685 / KC583 / Herrer 020/F12,63).